A 180-amino-acid chain; its full sequence is Phosphoribosylaminoimidazole carboxylase (180 aa).

Positions 35, 38, 62, 65, 89, and 91 each coordinate substrate.

It belongs to the AIR carboxylase family. Class II subfamily.

The catalysed reaction is 5-amino-1-(5-phospho-D-ribosyl)imidazole-4-carboxylate + H(+) = 5-amino-1-(5-phospho-beta-D-ribosyl)imidazole + CO2. The protein operates within purine metabolism; IMP biosynthesis via de novo pathway; 5-amino-1-(5-phospho-D-ribosyl)imidazole-4-carboxylate from 5-amino-1-(5-phospho-D-ribosyl)imidazole (carboxylase route): step 1/1. Its function is as follows. Catalyzes the reversible conversion of 5-aminoimidazole ribonucleotide (AIR) and CO(2) to 4-carboxy-5-aminoimidazole ribonucleotide (CAIR). The sequence is that of Phosphoribosylaminoimidazole carboxylase from Archaeoglobus fulgidus (strain ATCC 49558 / DSM 4304 / JCM 9628 / NBRC 100126 / VC-16).